Here is a 534-residue protein sequence, read N- to C-terminus: NAD(P)H-quinone oxidoreductase chain 4 (534 aa).

14 helical membrane-spanning segments follow: residues 12-32, 44-64, 94-114, 120-140, 144-164, 176-196, 220-240, 251-271, 285-305, 314-334, 340-360, 384-404, 425-445, and 472-492; these read FPWL…IPFF, FALS…INGF, ISMP…LAAW, PKLF…VFAV, LLFF…LAIW, FIIY…AMGF, ILCY…VPLH, TAPV…YALL, FAPL…LTSF, IAYS…SFSS, AMLQ…LVGA, FALW…SGFV, VIMA…LLSM, and VYII…PRLV.

This sequence belongs to the complex I subunit 4 family.

The protein localises to the cellular thylakoid membrane. It catalyses the reaction a plastoquinone + NADH + (n+1) H(+)(in) = a plastoquinol + NAD(+) + n H(+)(out). It carries out the reaction a plastoquinone + NADPH + (n+1) H(+)(in) = a plastoquinol + NADP(+) + n H(+)(out). Its function is as follows. NDH-1 shuttles electrons from NAD(P)H, via FMN and iron-sulfur (Fe-S) centers, to quinones in the respiratory chain. The immediate electron acceptor for the enzyme in this species is believed to be plastoquinone. Couples the redox reaction to proton translocation (for every two electrons transferred, four hydrogen ions are translocated across the cytoplasmic membrane), and thus conserves the redox energy in a proton gradient. In Prochlorococcus marinus (strain MIT 9312), this protein is NAD(P)H-quinone oxidoreductase chain 4.